Consider the following 152-residue polypeptide: Deoxyuridine 5'-triphosphate nucleotidohydrolase (152 aa).

Residues 72–74, N85, and 89–91 contribute to the substrate site; these read RSG and TID.

The protein belongs to the dUTPase family. Mg(2+) serves as cofactor.

It catalyses the reaction dUTP + H2O = dUMP + diphosphate + H(+). The protein operates within pyrimidine metabolism; dUMP biosynthesis; dUMP from dCTP (dUTP route): step 2/2. This enzyme is involved in nucleotide metabolism: it produces dUMP, the immediate precursor of thymidine nucleotides and it decreases the intracellular concentration of dUTP so that uracil cannot be incorporated into DNA. This is Deoxyuridine 5'-triphosphate nucleotidohydrolase from Rhodopseudomonas palustris (strain BisB5).